The sequence spans 201 residues: Dephospho-CoA kinase (201 aa).

The DPCK domain occupies 3-201 (WIGLTGGIAC…KWLEELKNQN (199 aa)). Position 11–16 (11–16 (ACGKST)) interacts with ATP.

The protein belongs to the CoaE family.

The protein localises to the cytoplasm. It carries out the reaction 3'-dephospho-CoA + ATP = ADP + CoA + H(+). The protein operates within cofactor biosynthesis; coenzyme A biosynthesis; CoA from (R)-pantothenate: step 5/5. In terms of biological role, catalyzes the phosphorylation of the 3'-hydroxyl group of dephosphocoenzyme A to form coenzyme A. This chain is Dephospho-CoA kinase, found in Bdellovibrio bacteriovorus (strain ATCC 15356 / DSM 50701 / NCIMB 9529 / HD100).